The following is a 226-amino-acid chain: V-type proton ATPase subunit E 2 (226 aa).

It belongs to the V-ATPase E subunit family. V-ATPase is a heteromultimeric enzyme made up of two complexes: the ATP-hydrolytic V1 complex and the proton translocation V0 complex. The V1 complex consists of three catalytic AB heterodimers that form a heterohexamer, three peripheral stalks each consisting of EG heterodimers, one central rotor including subunits D and F, and the regulatory subunits C and H. The proton translocation complex V0 consists of the proton transport subunit a, a ring of proteolipid subunits c9c'', rotary subunit d, subunits e and f, and the accessory subunits ATP6AP1/Ac45 and ATP6AP2/PRR. In terms of tissue distribution, testis specific.

Its function is as follows. Subunit of the V1 complex of vacuolar(H+)-ATPase (V-ATPase), a multisubunit enzyme composed of a peripheral complex (V1) that hydrolyzes ATP and a membrane integral complex (V0) that translocates protons. V-ATPase is responsible for acidifying and maintaining the pH of intracellular compartments and in some cell types, is targeted to the plasma membrane, where it is responsible for acidifying the extracellular environment. This is V-type proton ATPase subunit E 2 (Atp6v1e2) from Mus musculus (Mouse).